The sequence spans 359 residues: DNA polymerase IV (359 aa).

One can recognise a UmuC domain in the interval 4–185 (IIHIDMDCYF…LSLRKIPGVG (182 aa)). Residues Asp-8 and Asp-103 each contribute to the Mg(2+) site. The active site involves Glu-104.

Belongs to the DNA polymerase type-Y family. Monomer. It depends on Mg(2+) as a cofactor.

The protein resides in the cytoplasm. It catalyses the reaction DNA(n) + a 2'-deoxyribonucleoside 5'-triphosphate = DNA(n+1) + diphosphate. Its function is as follows. Poorly processive, error-prone DNA polymerase involved in untargeted mutagenesis. Copies undamaged DNA at stalled replication forks, which arise in vivo from mismatched or misaligned primer ends. These misaligned primers can be extended by PolIV. Exhibits no 3'-5' exonuclease (proofreading) activity. May be involved in translesional synthesis, in conjunction with the beta clamp from PolIII. This is DNA polymerase IV from Shewanella sp. (strain MR-7).